Reading from the N-terminus, the 266-residue chain is MYQVVASDLDGTLLSPDHTLSPYAKEPLKLLTARGINFVFATGRHHVDVGQIRDNLEIKSYMITSNGARVHDLDGNLIFAHNLDRDIASDLFGVVNDNPDIITNVYRDDEWFMNRHRPEEMRFFKEAVFKYALYEPGLLEPEGVSKVFFTCDSHEQLLPLEQAINARWGDRVNVSFSTLTCLEVMAGGVSKGHALEAVAKKLGYSLKDCIAFGDGMNDAEMLSMAGKGCIMGSAHQRLKDLHPELEVIGTNADDAVPHYLRKLYLS.

D8 (nucleophile) is an active-site residue. D8 is a binding site for Mg(2+). Phosphate is bound at residue L9. D10 contributes to the Mg(2+) binding site. Phosphate is bound by residues 42-43 (TG) and K191. Residue D214 coordinates Mg(2+). N217 is a binding site for phosphate.

This sequence belongs to the HAD-like hydrolase superfamily. Cof family. It depends on Mg(2+) as a cofactor. Requires Mn(2+) as cofactor. Co(2+) serves as cofactor. Zn(2+) is required as a cofactor.

The enzyme catalyses pyridoxal 5'-phosphate + H2O = pyridoxal + phosphate. It carries out the reaction sugar phosphate + H2O = sugar + phosphate.. In terms of biological role, catalyzes the dephosphorylation of pyridoxal-phosphate (PLP) and sugar phosphate. The chain is Pyridoxal phosphate phosphatase YigL (yigL) from Escherichia coli O157:H7.